The sequence spans 390 residues: NADH-quinone oxidoreductase subunit D (390 aa).

It belongs to the complex I 49 kDa subunit family. As to quaternary structure, NDH-1 is composed of 14 different subunits. Subunits NuoB, C, D, E, F, and G constitute the peripheral sector of the complex.

It localises to the cell inner membrane. It catalyses the reaction a quinone + NADH + 5 H(+)(in) = a quinol + NAD(+) + 4 H(+)(out). Its function is as follows. NDH-1 shuttles electrons from NADH, via FMN and iron-sulfur (Fe-S) centers, to quinones in the respiratory chain. The immediate electron acceptor for the enzyme in this species is believed to be ubiquinone. Couples the redox reaction to proton translocation (for every two electrons transferred, four hydrogen ions are translocated across the cytoplasmic membrane), and thus conserves the redox energy in a proton gradient. This chain is NADH-quinone oxidoreductase subunit D, found in Trichlorobacter lovleyi (strain ATCC BAA-1151 / DSM 17278 / SZ) (Geobacter lovleyi).